The sequence spans 166 residues: uncharacterized protein (166 aa).

The disordered stretch occupies residues 28 to 55 (SRQVHPPWPVPCKSKLQEQDSSESKESK). Over residues 42-55 (KLQEQDSSESKESK) the composition is skewed to basic and acidic residues. In terms of domain architecture, HTH araC/xylS-type spans 67 to 163 (QNAMLYIENN…NYTPKQFKRT (97 aa)). DNA-binding regions (H-T-H motif) lie at residues 84 to 105 (DTVA…KLAT) and 130 to 153 (VTET…KKRT).

This is an uncharacterized protein from Pseudoalteromonas carrageenovora (Alteromonas carrageenovora).